The following is a 223-amino-acid chain: Ribose-5-phosphate isomerase A (223 aa).

Substrate is bound by residues 32–35, 83–86, and 96–99; these read TGST, DGAD, and KGGG. The active-site Proton acceptor is the glutamate 105. Residue lysine 123 coordinates substrate.

Belongs to the ribose 5-phosphate isomerase family. Homodimer.

It catalyses the reaction aldehydo-D-ribose 5-phosphate = D-ribulose 5-phosphate. It participates in carbohydrate degradation; pentose phosphate pathway; D-ribose 5-phosphate from D-ribulose 5-phosphate (non-oxidative stage): step 1/1. Functionally, catalyzes the reversible conversion of ribose-5-phosphate to ribulose 5-phosphate. The chain is Ribose-5-phosphate isomerase A from Acinetobacter baumannii (strain AYE).